We begin with the raw amino-acid sequence, 147 residues long: uncharacterized protein (147 aa).

Residues 1 to 37 (MVALFKSSLGRPEQHQTPQIRISPASSNVEHSEKQPR) are disordered. The segment covering 15–29 (HQTPQIRISPASSNV) has biased composition (polar residues). The Cytochrome b5 heme-binding domain occupies 71-147 (PIPVTKEELA…LKTSFVGFLV (77 aa)). H106 and H129 together coordinate heme.

Belongs to the cytochrome b5 family.

This is an uncharacterized protein from Schizosaccharomyces pombe (strain 972 / ATCC 24843) (Fission yeast).